We begin with the raw amino-acid sequence, 509 residues long: tRNA-2-methylthio-N(6)-dimethylallyladenosine synthase (509 aa).

Over residues 1-15 (MNEQQRLASRQANSS) the composition is skewed to polar residues. The tract at residues 1-25 (MNEQQRLASRQANSSTKKEEKDYSK) is disordered. Basic and acidic residues predominate over residues 16–25 (TKKEEKDYSK). Positions 66–184 (RKFYIRTYGC…LPYILKDAMF (119 aa)) constitute an MTTase N-terminal domain. Residues C75, C111, C145, C221, C225, and C228 each contribute to the [4Fe-4S] cluster site. Positions 207–437 (RRGDIKAWVN…NTLVNEYGVN (231 aa)) constitute a Radical SAM core domain. One can recognise a TRAM domain in the interval 440 to 503 (KRYIGQIVEV…TWSLNGELVK (64 aa)).

Belongs to the methylthiotransferase family. MiaB subfamily. As to quaternary structure, monomer. Requires [4Fe-4S] cluster as cofactor.

It localises to the cytoplasm. It catalyses the reaction N(6)-dimethylallyladenosine(37) in tRNA + (sulfur carrier)-SH + AH2 + 2 S-adenosyl-L-methionine = 2-methylsulfanyl-N(6)-dimethylallyladenosine(37) in tRNA + (sulfur carrier)-H + 5'-deoxyadenosine + L-methionine + A + S-adenosyl-L-homocysteine + 2 H(+). Its function is as follows. Catalyzes the methylthiolation of N6-(dimethylallyl)adenosine (i(6)A), leading to the formation of 2-methylthio-N6-(dimethylallyl)adenosine (ms(2)i(6)A) at position 37 in tRNAs that read codons beginning with uridine. This is tRNA-2-methylthio-N(6)-dimethylallyladenosine synthase from Bacillus mycoides (strain KBAB4) (Bacillus weihenstephanensis).